The following is a 447-amino-acid chain: Clusterin (447 aa).

Positions 1–21 are cleaved as a signal peptide; the sequence is MKILLLCVALLLTWDNGMVLG. The short motif at 77-80 is the Nuclear localization signal element; that stretch reads KKKK. Disulfide bonds link Cys-101-Cys-312, Cys-112-Cys-304, Cys-115-Cys-301, Cys-120-Cys-294, and Cys-128-Cys-284. An N-linked (GlcNAc...) asparagine glycan is attached at Asn-102. At Ser-132 the chain carries Phosphoserine. N-linked (GlcNAc...) asparagine glycans are attached at residues Asn-144, Asn-290, Asn-327, Asn-353, and Asn-373. At Ser-394 the chain carries Phosphoserine. The short motif at 441–445 is the Nuclear localization signal element; that stretch reads RRKSR.

Belongs to the clusterin family. Antiparallel disulfide-linked heterodimer of an alpha chain and a beta chain. Self-associates and forms higher oligomers. Interacts with a broad range of misfolded proteins, including APP, APOC2 and LYZ. Slightly acidic pH promotes interaction with misfolded proteins. Forms high-molecular weight oligomers upon interaction with misfolded proteins. Interacts with APOA1, LRP2, CLUAP1 and PON1. Interacts with the complement membrane attack complex. Interacts (via alpha chain) with XRCC6. Interacts with SYVN1, COMMD1, BTRC, CUL1 and with ubiquitin and SCF (SKP1-CUL1-F-box protein) E3 ubiquitin-protein ligase complexes. Interacts (via alpha chain) with BAX in stressed cells, where BAX undergoes a conformation change leading to association with the mitochondrial membrane. Does not interact with BAX in unstressed cells. Found in a complex with LTF, CLU, EPPIN and SEMG1. Interacts (immaturely glycosylated pre-secreted form) with HSPA5; this interaction promotes CLU stability and facilitates stress-induced CLU retrotranslocation from the secretory pathway to the mitochondria, thereby reducing stress-induced apoptosis by stabilizing mitochondrial membrane integrity. Interacts with BCL2L1; this interaction releases and activates BAX and promotes cell death. Interacts with TGFBR2 and ACVR1. Interacts (secreted form) with STMN3; this interaction may act as an important modulator during neuronal differentiation. Interacts with VLDLR and LRP8. In terms of processing, proteolytically cleaved on its way through the secretory system, probably within the Golgi lumen. Proteolytic cleavage is not necessary for its chaperone activity. All non-secreted forms are not proteolytically cleaved. Chaperone activity of uncleaved forms is dependent on a non-reducing environment. Polyubiquitinated, leading to proteasomal degradation. Under cellular stress, the intracellular level of cleaved form is reduced due to proteasomal degradation. Post-translationally, extensively glycosylated with sulfated N-linked carbohydrates. About 30% of the protein mass is comprised of complex N-linked carbohydrate. Endoplasmic reticulum (ER) stress induces changes in glycosylation status and increases level of hypoglycosylated forms. Core carbohydrates are essential for chaperone activity. Non-secreted forms are hypoglycosylated or unglycosylated. Detected in Sertoli cells (at protein level). Detected in cultured Sertoli cells, testis, epididymis, liver and brain.

It is found in the secreted. The protein resides in the nucleus. It localises to the cytoplasm. The protein localises to the mitochondrion membrane. Its subcellular location is the cytosol. It is found in the microsome. The protein resides in the endoplasmic reticulum. It localises to the mitochondrion. The protein localises to the perinuclear region. Its subcellular location is the cytoplasmic vesicle. It is found in the secretory vesicle. The protein resides in the chromaffin granule. Functions as extracellular chaperone that prevents aggregation of non native proteins. Prevents stress-induced aggregation of blood plasma proteins. Inhibits formation of amyloid fibrils by APP, APOC2, B2M, CALCA, CSN3, SNCA and aggregation-prone LYZ variants (in vitro). Does not require ATP. Maintains partially unfolded proteins in a state appropriate for subsequent refolding by other chaperones, such as HSPA8/HSC70. Does not refold proteins by itself. Binding to cell surface receptors triggers internalization of the chaperone-client complex and subsequent lysosomal or proteasomal degradation. When secreted, protects cells against apoptosis and against cytolysis by complement: inhibits assembly of the complement membrane attack complex (MAC) by preventing polymerization of C9 pore component of the MAC complex. Intracellular forms interact with ubiquitin and SCF (SKP1-CUL1-F-box protein) E3 ubiquitin-protein ligase complexes and promote the ubiquitination and subsequent proteasomal degradation of target proteins. Promotes proteasomal degradation of COMMD1 and IKBKB. Modulates NF-kappa-B transcriptional activity. Following stress, promotes apoptosis. Inhibits apoptosis when associated with the mitochondrial membrane by interference with BAX-dependent release of cytochrome c into the cytoplasm. Plays a role in the regulation of cell proliferation. An intracellular form suppresses stress-induced apoptosis by stabilizing mitochondrial membrane integrity through interaction with HSPA5. Secreted form does not affect caspase or BAX-mediated intrinsic apoptosis and TNF-induced NF-kappa-B-activity. Secreted form act as an important modulator during neuronal differentiation through interaction with STMN3. Plays a role in the clearance of immune complexes that arise during cell injury. This is Clusterin from Rattus norvegicus (Rat).